Here is a 1778-residue protein sequence, read N- to C-terminus: MESFKELAREYDEKFKAFQDDLQKWEETSERKEYAEFHRVQAESEFPELKREREDRERWARAERIRGEDEKSMLAKEHADKKIRLGVAKIPRLLTESERKMDEFVERPGSILKDMKKEHRQSVLDRLEEWSPEERSLFKSRQADHVKIFHGLTEFFVDKTASDLVLFYYMNKKTEDYKKDFKPKKRVTKYKVGAFPSVEELAYFRMMPPLDFSSFPKNSLMCYFCCRTVNGIDLNGTFMPKEAYEIFAICPDEDRVVCSGCREEAAKLYKDNRCFGNRCSNQKKRANRVNRNIPLDFADFPVRTRAFIMDKLGSTRVAVKFCTPCKNALTRWINDVNNKEETIMAELLNYEGQVGWTDDEKTKLVTLINSSPTLDWVSISEGMNRRPNECKMQYDAMNGVKTQPMIEEVDEEDGNGQEEGGDALVNTPTTSSAAARRSGLARNAKKPVRTPRAPRSAGGRRTGGAVTRAQAVPKPVEDLGEEIDEMEIEDNDEDASRGSRGKDSKAPSDRDGSPADMEGDSPEGQDQDADQDQDQDQDVDEEEEEVIVRDIDSPVKTLLSPKILSGGHKPDFPPVPRIQKPSTSSQPPPPEPMDTKENESDDGEEDNDILEIDVDEPPAKRPTPTSSSSHLIGSSSVGGSERELGGRGLVQQQQQQQPQAQSAAPPVTVSTAAAATAERLVNATSPSPSVASQHLVPTETSTSVPPVTIVPPAIQQPVVVISGAAPQFTQQQTTHSPALIAQPIPQQLIPQRVSTPAQILTPTPVRPTAASTPSMDQFLGLFKQQQQQQQQQPQQSNLMQQLGNINPQFLALLLQQQQQQQQVQQAQVQAAQTQGSLTSGTPFQAQQRPDEALQKLFSSPEMLGTLLNAKYQFPQFPQAIQQNPLLMNAQHQLILQQQQLAMQHAQAQAAQAAQAQAAQAAQAQAQAQAEAKLKTQAAQAKAQADAQARVQTQQQAHLKAQAQAQYQMNRPQLIPASVQMPIGINTAYHQKSLTPSETSASATPPAHRPRAATTVGSKMPAGRSNVQEAELRTLKEELIKRIRLFRDRIAEDAHLKREEENIVTYTAQIQASRVQYNTEILGQMKQRYEQAAARRIEIVKELDEPAKFINGVQNKFNDFSVFKLDEIDRQTLHEILQRYAAEQKPDQLQQQQNDFHNLLRQNNIGIRQAQYPALQASPHQAAIIQHQQQQEAFKKLQQQHQDAQKRKLEAPVSSATPQVKRIALSQSSPVQRFSQHPNGTLPHNLAVVYQNKMPQDREKLLQEQQLNQYLFAAQQQHLQQQQQHHGTQPEQKSKRKSGIESITSMQGAPHRHIQLAGPSSSRIQSGRGVSPALSASRSVAPTISGAAGRSITAGTSGHSSTSDYNKELAERMNEVFKPTHPQLLQTKASAMNSNAVSPANTNNSDEIECVYQGPPKTPASIKRLQPTEGPRTLSGQRMKSILSVPAHQRRSSIPPVKTEDEAMECLSMMMYEEAKAPPSDRIVTKLISSSEAAAAANPSAKFSYLDIFNDVVKRDEERCQRMLQSTSVLQPSRELDAFLQQLQQNPQQYANLSAAEKLALQQYQIHSAHQKSQQQAQLQAAQQLQQQQQARPDHYEKFHLLRPNAEIVRPIPTTFSHFLNKATTSTVSSSASAPQFLQPPAAASIAAPTPISTPHAMPSPSVGVQTAPPTPQAVHHPVMPIIPGKPSSVNSNVSDVSSDDDDVRNPEKLPANRLPPLPGDKTAFRSVIDLRATGHVAVTKKIPVKYPLVVQAQNGIQPIKDYGPPCKNLVYEDLSDDE.

In terms of domain architecture, SANT spans aspartate 125–aspartate 176. Residues tryptophan 356–asparagine 398 enclose the Myb-like domain. Residues valine 409–glycine 421 are compositionally biased toward acidic residues. 6 disordered regions span residues valine 409–threonine 671, serine 992–serine 1024, lysine 1195–glutamine 1218, glutamine 1276–valine 1339, proline 1414–serine 1434, and alanine 1646–proline 1718. 2 stretches are compositionally biased toward low complexity: residues serine 431–arginine 442 and threonine 450–alanine 469. A compositionally biased stretch (acidic residues) spans aspartate 478 to glutamate 493. Over residues aspartate 494 to serine 513 the composition is skewed to basic and acidic residues. Composition is skewed to acidic residues over residues methionine 517–glutamate 545 and glutamate 599–glutamate 616. 2 stretches are compositionally biased toward low complexity: residues serine 626–glycine 639 and leucine 649–threonine 671. The segment covering glutamine 1276–histidine 1285 has biased composition (low complexity). The segment covering serine 1687–valine 1696 has biased composition (low complexity).

This sequence belongs to the N-CoR nuclear receptor corepressors family. As to quaternary structure, interacts with gex-3. Interacts (via C-terminus) with nhr-60. As to expression, in larvae, expressed in pharyngeal neurons, ventral and dorsal nerve cords, tail neurons, egg-laying neurons and egg-laying muscles. Detected in the neurons of the pharyngeal nerve ring, head neurons, tail neurons and egg-laying muscles in adults. Detected in male-specific tail ganglia and rays in males.

Its subcellular location is the nucleus. Its function is as follows. Mediates transcriptional repression by certain nuclear receptors. Plays a role in development and neuronal function. May play a role in muscle-specific oxidative mitochondrial metabolism. This Caenorhabditis elegans protein is Nuclear receptor corepressor 1.